The sequence spans 198 residues: Pyridoxal 5'-phosphate synthase subunit PdxT (198 aa).

49 to 51 (GES) lines the L-glutamine pocket. Cysteine 81 serves as the catalytic Nucleophile. L-glutamine is bound by residues arginine 113 and 141–142 (IR). Active-site charge relay system residues include histidine 177 and glutamate 179.

It belongs to the glutaminase PdxT/SNO family. In terms of assembly, in the presence of PdxS, forms a dodecamer of heterodimers. Only shows activity in the heterodimer.

The enzyme catalyses aldehydo-D-ribose 5-phosphate + D-glyceraldehyde 3-phosphate + L-glutamine = pyridoxal 5'-phosphate + L-glutamate + phosphate + 3 H2O + H(+). The catalysed reaction is L-glutamine + H2O = L-glutamate + NH4(+). The protein operates within cofactor biosynthesis; pyridoxal 5'-phosphate biosynthesis. Functionally, catalyzes the hydrolysis of glutamine to glutamate and ammonia as part of the biosynthesis of pyridoxal 5'-phosphate. The resulting ammonia molecule is channeled to the active site of PdxS. The polypeptide is Pyridoxal 5'-phosphate synthase subunit PdxT (Mycobacterium avium (strain 104)).